Here is a 360-residue protein sequence, read N- to C-terminus: Phospho-N-acetylmuramoyl-pentapeptide-transferase (360 aa).

The next 10 helical transmembrane spans lie at 25-45, 71-91, 94-114, 129-148, 168-188, 199-219, 239-259, 263-283, 288-308, and 337-357; these read TGGA…WIID, TPTM…VLWA, LNPY…VGFY, SGRT…CYAL, TAIY…VGAG, GLAI…SYLA, LAVL…FNAP, IFMG…IAVA, FVLA…IVQV, and QIVI…LSTL.

The protein belongs to the glycosyltransferase 4 family. MraY subfamily. The cofactor is Mg(2+).

The protein resides in the cell inner membrane. The catalysed reaction is UDP-N-acetyl-alpha-D-muramoyl-L-alanyl-gamma-D-glutamyl-meso-2,6-diaminopimeloyl-D-alanyl-D-alanine + di-trans,octa-cis-undecaprenyl phosphate = di-trans,octa-cis-undecaprenyl diphospho-N-acetyl-alpha-D-muramoyl-L-alanyl-D-glutamyl-meso-2,6-diaminopimeloyl-D-alanyl-D-alanine + UMP. It participates in cell wall biogenesis; peptidoglycan biosynthesis. Catalyzes the initial step of the lipid cycle reactions in the biosynthesis of the cell wall peptidoglycan: transfers peptidoglycan precursor phospho-MurNAc-pentapeptide from UDP-MurNAc-pentapeptide onto the lipid carrier undecaprenyl phosphate, yielding undecaprenyl-pyrophosphoryl-MurNAc-pentapeptide, known as lipid I. The protein is Phospho-N-acetylmuramoyl-pentapeptide-transferase of Rhodopseudomonas palustris (strain BisA53).